Consider the following 394-residue polypeptide: Phosphoglycerate kinase (394 aa).

Substrate-binding positions include 21–23 (DLN), R37, 60–63 (HLGR), R115, and R148. Residues K199, E321, and 347 to 350 (GGDT) each bind ATP.

This sequence belongs to the phosphoglycerate kinase family. Monomer.

It is found in the cytoplasm. It carries out the reaction (2R)-3-phosphoglycerate + ATP = (2R)-3-phospho-glyceroyl phosphate + ADP. Its pathway is carbohydrate degradation; glycolysis; pyruvate from D-glyceraldehyde 3-phosphate: step 2/5. In Azoarcus sp. (strain BH72), this protein is Phosphoglycerate kinase.